The following is a 297-amino-acid chain: Undecaprenyl-diphosphatase 3 (297 aa).

6 helical membrane-spanning segments follow: residues proline 39–phenylalanine 59, tryptophan 89–isoleucine 109, leucine 118–serine 138, phenylalanine 203–glycine 223, proline 237–leucine 257, and phenylalanine 268–isoleucine 288.

Belongs to the UppP family.

It localises to the cell membrane. The catalysed reaction is di-trans,octa-cis-undecaprenyl diphosphate + H2O = di-trans,octa-cis-undecaprenyl phosphate + phosphate + H(+). Functionally, catalyzes the dephosphorylation of undecaprenyl diphosphate (UPP). Confers resistance to bacitracin. In Frankia alni (strain DSM 45986 / CECT 9034 / ACN14a), this protein is Undecaprenyl-diphosphatase 3.